Consider the following 174-residue polypeptide: MTTILSVRRDGQVVIGGDGQVSLGNTVMKGNARKVRRLYKNQVLAGFAGGTADAFTLFERFEAKLESHNGQLTRAAVELAKDWRTDRSLRRLEALLAVADKEASLIITGNGDVIQPEDDLIAIGSGGMYAQAAARALLENTQLDARNIVEKGLKIAGDICVYTNQNHTIEVLDY.

T2 is an active-site residue. The Na(+) site is built by G157, C160, and T163.

The protein belongs to the peptidase T1B family. HslV subfamily. As to quaternary structure, a double ring-shaped homohexamer of HslV is capped on each side by a ring-shaped HslU homohexamer. The assembly of the HslU/HslV complex is dependent on binding of ATP.

It is found in the cytoplasm. It catalyses the reaction ATP-dependent cleavage of peptide bonds with broad specificity.. With respect to regulation, allosterically activated by HslU binding. In terms of biological role, protease subunit of a proteasome-like degradation complex believed to be a general protein degrading machinery. The chain is ATP-dependent protease subunit HslV from Cellvibrio japonicus (strain Ueda107) (Pseudomonas fluorescens subsp. cellulosa).